Here is a 370-residue protein sequence, read N- to C-terminus: tRNA-specific 2-thiouridylase MnmA (370 aa).

Residues 14–21 and Met40 contribute to the ATP site; that span reads GMSGGVDS. Positions 100-102 are interaction with target base in tRNA; sequence NPD. The Nucleophile role is filled by Cys105. A disulfide bond links Cys105 and Cys205. Gly129 is a binding site for ATP. The interaction with tRNA stretch occupies residues 155-157; the sequence is KDQ. The active-site Cysteine persulfide intermediate is the Cys205. Positions 321–322 are interaction with tRNA; that stretch reads RY.

The protein belongs to the MnmA/TRMU family.

It is found in the cytoplasm. The catalysed reaction is S-sulfanyl-L-cysteinyl-[protein] + uridine(34) in tRNA + AH2 + ATP = 2-thiouridine(34) in tRNA + L-cysteinyl-[protein] + A + AMP + diphosphate + H(+). Catalyzes the 2-thiolation of uridine at the wobble position (U34) of tRNA, leading to the formation of s(2)U34. This chain is tRNA-specific 2-thiouridylase MnmA, found in Bordetella avium (strain 197N).